The chain runs to 303 residues: MTTIESKCSIDGILLLNKPQGMTSNAALQKAKHLFGAKKAGHTGSLDPLATGMLPLCFGEATKICQYLLNADKSYETIGRLGSKTNTADCTGEVIFCIENYTVSHEELIATLEKYKGKTKQIPSMFSALKHKGTPLYRLAREGIEIERKARDIVISQLKLEQFDGECFTLTVSCSKGTYIRNLVEDIGDTLKAGAHMTKLHRLYTAGFENNRMYTLDELQDMPLSQRLACLIPIDQAVQHLTPVILSDSEVTAIRQGKVISNKTSAVEGEDLRLYGEQSQFIGIGQALIHGDIKAKRLVSFAL.

D47 acts as the Nucleophile in catalysis.

The protein belongs to the pseudouridine synthase TruB family. Type 1 subfamily.

It carries out the reaction uridine(55) in tRNA = pseudouridine(55) in tRNA. Responsible for synthesis of pseudouridine from uracil-55 in the psi GC loop of transfer RNAs. The protein is tRNA pseudouridine synthase B of Legionella pneumophila (strain Lens).